Here is a 571-residue protein sequence, read N- to C-terminus: Isocitrate dehydrogenase kinase/phosphatase (571 aa).

ATP contacts are provided by residues 318–324 (APGVRGM) and Lys-339. Asp-374 is a catalytic residue.

The protein belongs to the AceK family.

Its subcellular location is the cytoplasm. It carries out the reaction L-seryl-[isocitrate dehydrogenase] + ATP = O-phospho-L-seryl-[isocitrate dehydrogenase] + ADP + H(+). In terms of biological role, bifunctional enzyme which can phosphorylate or dephosphorylate isocitrate dehydrogenase (IDH) on a specific serine residue. This is a regulatory mechanism which enables bacteria to bypass the Krebs cycle via the glyoxylate shunt in response to the source of carbon. When bacteria are grown on glucose, IDH is fully active and unphosphorylated, but when grown on acetate or ethanol, the activity of IDH declines drastically concomitant with its phosphorylation. The chain is Isocitrate dehydrogenase kinase/phosphatase from Pseudomonas entomophila (strain L48).